The chain runs to 151 residues: 3-hydroxyacyl-[acyl-carrier-protein] dehydratase FabZ (151 aa).

His-54 is an active-site residue.

The protein belongs to the thioester dehydratase family. FabZ subfamily.

It localises to the cytoplasm. It carries out the reaction a (3R)-hydroxyacyl-[ACP] = a (2E)-enoyl-[ACP] + H2O. Involved in unsaturated fatty acids biosynthesis. Catalyzes the dehydration of short chain beta-hydroxyacyl-ACPs and long chain saturated and unsaturated beta-hydroxyacyl-ACPs. This chain is 3-hydroxyacyl-[acyl-carrier-protein] dehydratase FabZ, found in Erwinia tasmaniensis (strain DSM 17950 / CFBP 7177 / CIP 109463 / NCPPB 4357 / Et1/99).